The primary structure comprises 234 residues: Mediator of RNA polymerase II transcription subunit 4 (234 aa).

Residues 71–124 adopt a coiled-coil conformation; the sequence is HQEAYRRLVEKKNEVAGLEMRVRGLVKRLEEGRKELEGMIDQGERSLEDIQKSE. The interval 188-234 is disordered; it reads GVVGEEQKAPQKVEERREHVEHEESGRRYDPNAVFQLDLNSDESDED. Positions 189-217 are enriched in basic and acidic residues; that stretch reads VVGEEQKAPQKVEERREHVEHEESGRRYD.

Belongs to the Mediator complex subunit 4 family. In terms of assembly, component of the Mediator complex.

It is found in the nucleus. In terms of biological role, component of the Mediator complex, a coactivator involved in the regulated transcription of nearly all RNA polymerase II-dependent genes. Mediator functions as a bridge to convey information from gene-specific regulatory proteins to the basal RNA polymerase II transcription machinery. Mediator is recruited to promoters by direct interactions with regulatory proteins and serves as a scaffold for the assembly of a functional preinitiation complex with RNA polymerase II and the general transcription factors. The sequence is that of Mediator of RNA polymerase II transcription subunit 4 (MED4) from Cryptococcus neoformans var. neoformans serotype D (strain B-3501A) (Filobasidiella neoformans).